The following is a 740-amino-acid chain: ATP-dependent RNA helicase DBP4 (740 aa).

The disordered stretch occupies residues 1–37 (MKKRADPRKIKREEHKQKLSKLQERVDNFGEDEADKE). Positions 7–28 (PRKIKREEHKQKLSKLQERVDN) are enriched in basic and acidic residues. Residues 39–67 (SKFEELPLSEATIEGLKNSHYVTCTDVQK) carry the Q motif motif. In terms of domain architecture, Helicase ATP-binding spans 70–244 (IPPALQGHDL…RLSLADPKYI (175 aa)). 83–90 (ARTGSGKT) is a binding site for ATP. The DEAD box signature appears at 192–195 (DEAD). One can recognise a Helicase C-terminal domain in the interval 257 to 421 (NLEQNYVCVE…TIRPNKKKSI (165 aa)). The segment at 565–740 (RQDHNLESDD…ESLTSKLLKK (176 aa)) is disordered. Basic and acidic residues predominate over residues 636-662 (QVKEFVDRETKDMEEADVGDKELVKQK). Acidic residues-rich tracts occupy residues 680-695 (DEYD…SEEE) and 709-731 (SSDE…EDLE).

This sequence belongs to the DEAD box helicase family. DDX10/DBP4 subfamily. In terms of assembly, interacts with the U3 and U14 snoRNAs. Associates with pre-ribosomal complexes.

It localises to the nucleus. The protein localises to the nucleolus. The catalysed reaction is ATP + H2O = ADP + phosphate + H(+). Its function is as follows. ATP-dependent RNA helicase required for ribosome biogenesis. Involved in the release of U14 snoRNA in pre-ribosomal complexes. Required for pre-rRNA cleavage at site A2. The sequence is that of ATP-dependent RNA helicase DBP4 (DBP4) from Yarrowia lipolytica (strain CLIB 122 / E 150) (Yeast).